Here is a 551-residue protein sequence, read N- to C-terminus: Cilia- and flagella-associated protein 45 (551 aa).

2 disordered regions span residues 1–30 (MPLSTAGILSSSSAASNRSRNKARYRTKAV) and 461–489 (RLEEEKKATGRLQHANELRRQVRENQQKE). Positions 157–526 (NNNKKLSDLE…IKRKKLEELR (370 aa)) form a coiled coil.

The protein belongs to the CFAP45 family. As to quaternary structure, microtubule inner protein component of sperm flagellar doublet microtubules. Interacts with AK8; dimerization with AK8 may create a cavity at the interface of the dimer that can accommodate AMP. Interacts with CFAP52. Interacts with ENKUR. Directly interacts with DNALI1. Interacts with DNAH11. Interacts with DNAI1. As to expression, expressed in respiratory cells and in sperm (at protein level). Expressed in nasopharyngeal epithelium and trachea.

It localises to the cytoplasm. The protein localises to the cytoskeleton. The protein resides in the cilium axoneme. Its subcellular location is the flagellum axoneme. It is found in the cell projection. It localises to the cilium. The protein localises to the flagellum. Functionally, microtubule inner protein (MIP) part of the dynein-decorated doublet microtubules (DMTs) in cilia axoneme, which is required for motile cilia beating. It is an AMP-binding protein that may facilitate dynein ATPase-dependent ciliary and flagellar beating via adenine nucleotide homeostasis. May function as a donor of AMP to AK8 and hence promote ADP production. The polypeptide is Cilia- and flagella-associated protein 45 (Homo sapiens (Human)).